Here is a 558-residue protein sequence, read N- to C-terminus: Oxygen-dependent choline dehydrogenase (558 aa).

Residue 4–33 (DYIIIGAGSAGNVLATRLTEDSDTTVLLLE) participates in FAD binding. Catalysis depends on histidine 473, which acts as the Proton acceptor.

The protein belongs to the GMC oxidoreductase family. It depends on FAD as a cofactor.

The catalysed reaction is choline + A = betaine aldehyde + AH2. The enzyme catalyses betaine aldehyde + NAD(+) + H2O = glycine betaine + NADH + 2 H(+). The protein operates within amine and polyamine biosynthesis; betaine biosynthesis via choline pathway; betaine aldehyde from choline (cytochrome c reductase route): step 1/1. Functionally, involved in the biosynthesis of the osmoprotectant glycine betaine. Catalyzes the oxidation of choline to betaine aldehyde and betaine aldehyde to glycine betaine at the same rate. The polypeptide is Oxygen-dependent choline dehydrogenase (Citrobacter koseri (strain ATCC BAA-895 / CDC 4225-83 / SGSC4696)).